Consider the following 375-residue polypeptide: MIIKTLLASVAIMLIATVNAEYNVAKYCELVKIGTLMPSMISCQDYYICRLNNQPIPVKCGANTVFDKDTQGCVPEAQANCILSLDNPCENKDRTFAPSSKACNEWHYCLNGNIVANGSCQPGQIFDASKNSCIYGACNSDDDDSNSDFTPVLNICDIMQNGQFFGDFENCQNWQKCNNGRLQKGICLGNLVYDTKNGMCLQNDGTMCERTNGMVSEDGGAPDETLCTSSNDGPLPDKLTCSVYYICEQDTTSTPTTYKWIKTSCPNGQYFDVFGDGCLDRAKRRVYTGCNRCEYTTGSTTYWVNAVSNDCTKFSTCRNGRKITNEDGSCNSGYYFNEADQYCNMGDFTNYAETNGACQNYSCNGYDCTTKPSAT.

An N-terminal signal peptide occupies residues 1–20 (MIIKTLLASVAIMLIATVNA). 5 consecutive Chitin-binding type-2 domains span residues 25 to 83 (AKYC…NCIL), 86 to 143 (DNPC…SDDD), 153 to 210 (LNIC…MCER), 224 to 292 (ETLC…GCNR), and 294 to 360 (EYTT…ACQN). A disulfide bridge connects residues cysteine 60 and cysteine 73. Asparagine 117 carries N-linked (GlcNAc...) asparagine glycosylation. 4 disulfide bridges follow: cysteine 120–cysteine 133, cysteine 187–cysteine 200, cysteine 265–cysteine 278, and cysteine 330–cysteine 343. The N-linked (GlcNAc...) asparagine glycan is linked to asparagine 360.

In terms of processing, glycosylated. As to expression, cardia and midgut peritrophic membrane.

Functionally, may bind chitin or related oligosaccharide structures. The sequence is that of Peritrophin-48 from Lucilia cuprina (Green bottle fly).